The sequence spans 422 residues: uncharacterized protein (422 aa).

Positions 1 to 22 (MIQNNPKSIGSSSNKSARSSGS) are disordered. A compositionally biased stretch (low complexity) spans 7 to 22 (KSIGSSSNKSARSSGS).

This is an uncharacterized protein from Acanthamoeba polyphaga mimivirus (APMV).